A 145-amino-acid polypeptide reads, in one-letter code: Large ribosomal subunit protein uL13 (145 aa).

It belongs to the universal ribosomal protein uL13 family. As to quaternary structure, part of the 50S ribosomal subunit.

This protein is one of the early assembly proteins of the 50S ribosomal subunit, although it is not seen to bind rRNA by itself. It is important during the early stages of 50S assembly. The protein is Large ribosomal subunit protein uL13 of Geobacillus thermodenitrificans (strain NG80-2).